Here is a 299-residue protein sequence, read N- to C-terminus: Taste receptor type 2 member 45 (299 aa).

Position 1 (Met-1) is a topological domain, extracellular. A helical membrane pass occupies residues Ile-2–Phe-22. Residues Ala-23–Arg-55 are Cytoplasmic-facing. A helical transmembrane segment spans residues Val-56–Cys-76. Over Ser-77 to Pro-98 the chain is Extracellular. The chain crosses the membrane as a helical span at residues Ala-99–Leu-119. Residues Arg-120 to Lys-126 are Cytoplasmic-facing. Residues Ser-127 to Val-147 traverse the membrane as a helical segment. At Asn-148 to Thr-178 the chain is on the extracellular side. The N-linked (GlcNAc...) asparagine glycan is linked to Asn-161. A helical membrane pass occupies residues Val-179–Val-199. Residues Cys-200–Gln-229 are Cytoplasmic-facing. Residues Thr-230–Trp-250 traverse the membrane as a helical segment. At Ser-251–Pro-259 the chain is on the extracellular side. The helical transmembrane segment at Val-260–Ile-280 threads the bilayer. Topologically, residues Trp-281–Tyr-299 are cytoplasmic.

This sequence belongs to the G-protein coupled receptor T2R family. In terms of tissue distribution, expressed in subsets of taste receptor cells of the tongue and exclusively in gustducin-positive cells.

It is found in the membrane. Functionally, receptor that may play a role in the perception of bitterness and is gustducin-linked. May play a role in sensing the chemical composition of the gastrointestinal content. The activity of this receptor may stimulate alpha gustducin, mediate PLC-beta-2 activation and lead to the gating of TRPM5. This chain is Taste receptor type 2 member 45 (TAS2R45), found in Homo sapiens (Human).